The chain runs to 319 residues: Dehydrogenase/reductase SDR family member 9 (319 aa).

An N-terminal signal peptide occupies residues methionine 1–glycine 20. Residues isoleucine 34 to alanine 58 and aspartate 83 contribute to the NAD(+) site. A substrate-binding site is contributed by serine 164. The Proton acceptor role is filled by tyrosine 176. Position 180 (lysine 180) interacts with NAD(+).

This sequence belongs to the short-chain dehydrogenases/reductases (SDR) family. Homotetramer.

It is found in the microsome membrane. It localises to the endoplasmic reticulum membrane. It catalyses the reaction 3beta-hydroxy-5alpha-pregnane-20-one + NAD(+) = 5alpha-pregnane-3,20-dione + NADH + H(+). The enzyme catalyses 17beta-hydroxy-5alpha-androstan-3-one + NAD(+) = 5alpha-androstan-3,17-dione + NADH + H(+). The catalysed reaction is androsterone + NAD(+) = 5alpha-androstan-3,17-dione + NADH + H(+). It carries out the reaction 5alpha-androstane-3alpha,17beta-diol + NAD(+) = 17beta-hydroxy-5alpha-androstan-3-one + NADH + H(+). It catalyses the reaction all-trans-retinol + NAD(+) = all-trans-retinal + NADH + H(+). The enzyme catalyses 3alpha-hydroxy-5alpha-pregnan-20-one + NAD(+) = 5alpha-pregnane-3,20-dione + NADH + H(+). 3-alpha-hydroxysteroid dehydrogenase that converts 3-alpha-tetrahydroprogesterone (allopregnanolone) to dihydroxyprogesterone and 3-alpha-androstanediol to dihydroxyprogesterone. Also plays a role in the biosynthesis of retinoic acid. Can utilize both NADH and NADPH. The polypeptide is Dehydrogenase/reductase SDR family member 9 (Dhrs9) (Mus musculus (Mouse)).